Consider the following 424-residue polypeptide: Glutamate-1-semialdehyde 2,1-aminomutase (424 aa).

An N6-(pyridoxal phosphate)lysine modification is found at K258.

The protein belongs to the class-III pyridoxal-phosphate-dependent aminotransferase family. HemL subfamily. Requires pyridoxal 5'-phosphate as cofactor.

Its subcellular location is the cytoplasm. The enzyme catalyses (S)-4-amino-5-oxopentanoate = 5-aminolevulinate. It functions in the pathway porphyrin-containing compound metabolism; protoporphyrin-IX biosynthesis; 5-aminolevulinate from L-glutamyl-tRNA(Glu): step 2/2. This chain is Glutamate-1-semialdehyde 2,1-aminomutase, found in Pyrobaculum islandicum (strain DSM 4184 / JCM 9189 / GEO3).